The primary structure comprises 1153 residues: Cytosolic carboxypeptidase 1 (1153 aa).

The disordered stretch occupies residues 357–400 (NQPPGVDDVVDESDENEATEVDTENDTENEEDDTGHKTQNDDIE). Over residues 364–389 (DVVDESDENEATEVDTENDTENEEDD) the composition is skewed to acidic residues. Residues 774-1063 (YPYTYSMLKM…QFCLALLRLR (290 aa)) form the Peptidase M14 domain. Residues His845, Glu848, and His942 each contribute to the Zn(2+) site. Catalysis depends on Glu1027, which acts as the Proton donor/acceptor. A compositionally biased stretch (acidic residues) spans 1108-1128 (AFLEEVDYSAESNDENDPELE). Residues 1108-1153 (AFLEEVDYSAESNDENDPELEPDLRDNHALPDPSSDSELSHQDSLT) are disordered. The segment covering 1141–1153 (SSDSELSHQDSLT) has biased composition (polar residues).

It belongs to the peptidase M14 family. It depends on Zn(2+) as a cofactor.

The protein resides in the cytoplasm. It is found in the cytosol. It localises to the nucleus. Its subcellular location is the mitochondrion. The enzyme catalyses (L-glutamyl)(n+1)-gamma-L-glutamyl-L-glutamyl-[protein] + H2O = (L-glutamyl)(n)-gamma-L-glutamyl-L-glutamyl-[protein] + L-glutamate. It catalyses the reaction C-terminal L-alpha-aminoacyl-L-glutamyl-L-glutamyl-[tubulin] + H2O = C-terminal L-alpha-aminoacyl-L-glutamyl-[tubulin] + L-glutamate. In terms of biological role, metallocarboxypeptidase that mediates protein deglutamylation of tubulin and non-tubulin target proteins. Catalyzes the removal of polyglutamate side chains present on the gamma-carboxyl group of glutamate residues within the C-terminal tail of alpha- and beta-tubulin. Specifically cleaves tubulin long-side-chains, while it is not able to remove the branching point glutamate. Also catalyzes the removal of polyglutamate residues from the carboxy-terminus of alpha-tubulin as well as non-tubulin proteins. This chain is Cytosolic carboxypeptidase 1 (agtpbp1), found in Danio rerio (Zebrafish).